The chain runs to 95 residues: Putative per-hexamer repeat protein 4 (95 aa).

The polypeptide is Putative per-hexamer repeat protein 4 (Phxr4) (Mus musculus (Mouse)).